Reading from the N-terminus, the 427-residue chain is Gustatory receptor for sugar taste 43a (427 aa).

Over 1-37 (MEISQPSIGIFYISKVLALAPYATVRNSKGRVEIGRS) the chain is Cytoplasmic. A helical transmembrane segment spans residues 38 to 63 (WLFTVYSATLTVVMVFLTYRGLLFDA). Over 64-75 (NSEIPVRMKSAT) the chain is Extracellular. Beta-D-fructose is bound by residues arginine 70 and aspartate 83. The chain crosses the membrane as a helical span at residues 76 to 96 (SKVVTALDVSVVVMAIVSGVY). At 97-135 (CGLFSLNDTLELNDRLNKIDNTLNAYNNFRRDRWRALGM) the chain is on the cytoplasmic side. A helical transmembrane segment spans residues 136–158 (AAVSLLAISILVGLDVGTWMRIA). The Extracellular segment spans residues 159 to 168 (QDMNIAQSDT). A helical transmembrane segment spans residues 169–193 (ELNVHWYIPFYSLYFILTGLQVNIA). Tyrosine 182 is a beta-D-fructose binding site. Topologically, residues 194 to 293 (NTAYGLGRRF…CVHLLSNSFG (100 aa)) are cytoplasmic. The chain crosses the membrane as a helical span at residues 294-316 (IAVLFILVSCLLHLVATAYFLFL). Beta-D-fructose is bound at residue threonine 310. Residues 317–324 (ELLSKRDN) are Extracellular-facing. The chain crosses the membrane as a helical span at residues 325–346 (GYLWVQMLWICFHFLRLLMVVE). Beta-D-fructose is bound at residue histidine 337. Topologically, residues 347–402 (PCHLAARESRKTIQIVCEIERKVHEPILAEAVKKFWQQLLVVDADFSACGLCRVNR) are cytoplasmic. The helical transmembrane segment at 403–423 (TILTSFASAIATYLVILIQFQ) threads the bilayer. Ca(2+) is bound at residue glutamine 421. The Extracellular segment spans residues 424–427 (RTNG).

It belongs to the insect chemoreceptor superfamily. Gustatory receptor (GR) family. Gr21a subfamily. As to quaternary structure, homotetramer. Expressed in the adult labellar chemosensory neurons and in the adult head, abdomen, leg and wing. In larvae, is expressed in taste organs, as well as the brain and the gastrointestinal system.

The protein localises to the cell membrane. Its function is as follows. Gustatory receptor which mediates acceptance or avoidance behavior, depending on its substrates. Gr43a is the main sugar receptor in larvae. Functions as a narrowly tuned fructose receptor in taste neurons but also as a fructose receptor in the brain. Necessary and sufficient to sense hemolymph fructose and promote feeding in hungry flies but suppress feeding in satiated flies. The protein is Gustatory receptor for sugar taste 43a (Gr43a) of Drosophila melanogaster (Fruit fly).